The chain runs to 230 residues: Cytidylate kinase (230 aa).

G12 to T20 is an ATP binding site.

It belongs to the cytidylate kinase family. Type 1 subfamily.

It is found in the cytoplasm. The catalysed reaction is CMP + ATP = CDP + ADP. The enzyme catalyses dCMP + ATP = dCDP + ADP. The chain is Cytidylate kinase from Shewanella halifaxensis (strain HAW-EB4).